Here is a 578-residue protein sequence, read N- to C-terminus: Septation ring formation regulator EzrA (578 aa).

The Extracellular segment spans residues 1-8; it reads MKNNWIII. The helical transmembrane segment at 9-27 threads the bilayer; that stretch reads LVLVIVIIAAVLYLIGYFM. Residues 28–578 lie on the Cytoplasmic side of the membrane; sequence RKKNQEQLDE…NINNPNLTAI (551 aa). Coiled coils occupy residues 103-165, 256-285, and 394-490; these read RFMK…DDKA, QNFA…AAVE, and KILD…DDLE.

Belongs to the EzrA family.

It is found in the cell membrane. Functionally, negative regulator of FtsZ ring formation; modulates the frequency and position of FtsZ ring formation. Inhibits FtsZ ring formation at polar sites. Interacts either with FtsZ or with one of its binding partners to promote depolymerization. This Enterococcus faecalis (strain ATCC 700802 / V583) protein is Septation ring formation regulator EzrA.